Consider the following 603-residue polypeptide: Rab proteins geranylgeranyltransferase component A (603 aa).

S470 bears the Phosphoserine mark.

Belongs to the Rab GDI family.

In terms of biological role, substrate-binding subunit (component A) of the Rab geranylgeranyltransferase (GGTase) complex. Binds unprenylated Rab proteins and presents the substrate peptide to the catalytic component B. The component A is thought to be regenerated by transferring its prenylated Rab back to the donor membrane. The polypeptide is Rab proteins geranylgeranyltransferase component A (MRS6) (Saccharomyces cerevisiae (strain ATCC 204508 / S288c) (Baker's yeast)).